Here is a 278-residue protein sequence, read N- to C-terminus: Glycerophosphodiester phosphodiesterase GpdQ (278 aa).

Residues D8, H10, D50, N80, H156, H195, and H197 each coordinate Fe cation.

It belongs to the cyclic nucleotide phosphodiesterase class-III family. It depends on Fe(2+) as a cofactor.

It catalyses the reaction a sn-glycero-3-phosphodiester + H2O = an alcohol + sn-glycerol 3-phosphate + H(+). The catalysed reaction is sn-glycero-3-phosphoethanolamine + H2O = ethanolamine + sn-glycerol 3-phosphate + H(+). Catalyzes the hydrolysis of the 3'-5' phosphodiester bond of glycerophosphodiesters such as glycerophosphorylethanolamine (GPE), a typical phospholipid metabolite. The protein is Glycerophosphodiester phosphodiesterase GpdQ of Enterobacter lignolyticus (strain SCF1).